Reading from the N-terminus, the 202-residue chain is Adenosylcobalamin/alpha-ribazole phosphatase (202 aa).

Residue His8 is the Tele-phosphohistidine intermediate of the active site. The active-site Proton donor/acceptor is the Glu81.

Belongs to the phosphoglycerate mutase family. As to quaternary structure, monomer.

The enzyme catalyses adenosylcob(III)alamin 5'-phosphate + H2O = adenosylcob(III)alamin + phosphate. The catalysed reaction is alpha-ribazole 5'-phosphate + H2O = alpha-ribazole + phosphate. It functions in the pathway nucleoside biosynthesis; alpha-ribazole biosynthesis; alpha-ribazole from 5,6-dimethylbenzimidazole: step 2/2. Functionally, catalyzes the conversion of adenosylcobalamin 5'-phosphate to adenosylcobalamin (vitamin B12); involved in the assembly of the nucleotide loop of cobalamin. Also catalyzes the hydrolysis of the phospho group from alpha-ribazole 5'-phosphate to form alpha-ribazole. This is Adenosylcobalamin/alpha-ribazole phosphatase (cobC) from Salmonella typhimurium (strain LT2 / SGSC1412 / ATCC 700720).